Here is a 255-residue protein sequence, read N- to C-terminus: Triosephosphate isomerase (255 aa).

9-11 is a binding site for substrate; that stretch reads NWK. Catalysis depends on His100, which acts as the Electrophile. Catalysis depends on Glu169, which acts as the Proton acceptor. Substrate is bound by residues Gly175, Ser208, and 229-230; that span reads GG.

Belongs to the triosephosphate isomerase family. Homodimer.

The protein resides in the cytoplasm. It catalyses the reaction D-glyceraldehyde 3-phosphate = dihydroxyacetone phosphate. The protein operates within carbohydrate biosynthesis; gluconeogenesis. It functions in the pathway carbohydrate degradation; glycolysis; D-glyceraldehyde 3-phosphate from glycerone phosphate: step 1/1. Its function is as follows. Involved in the gluconeogenesis. Catalyzes stereospecifically the conversion of dihydroxyacetone phosphate (DHAP) to D-glyceraldehyde-3-phosphate (G3P). The polypeptide is Triosephosphate isomerase (Synechococcus sp. (strain JA-3-3Ab) (Cyanobacteria bacterium Yellowstone A-Prime)).